The sequence spans 136 residues: Monothiol glutaredoxin-S3 (136 aa).

The Glutaredoxin domain occupies 18 to 135 (EREVRRAVEE…PVLKQAGALW (118 aa)). [2Fe-2S] cluster is bound at residue Cys-38. The Responsive for interaction with TGA factors motif lies at 133 to 136 (ALWL).

Belongs to the glutaredoxin family. CC-type subfamily.

It localises to the cytoplasm. The protein localises to the nucleus. In terms of biological role, may only reduce GSH-thiol disulfides, but not protein disulfides. This chain is Monothiol glutaredoxin-S3 (GRXS3), found in Oryza sativa subsp. japonica (Rice).